We begin with the raw amino-acid sequence, 138 residues long: Histone H2A.Z (138 aa).

Residues 1-10 show a composition bias toward gly residues; it reads MSSKVGGGKG. A disordered region spans residues 1-21; it reads MSSKVGGGKGGKSKTSSEAKV. 2 positions are modified to N6-acetyllysine: Lys4 and Lys9.

Belongs to the histone H2A family. In terms of assembly, the nucleosome is a histone octamer containing two molecules each of H2A, H2B, H3 and H4 assembled in one H3-H4 heterotetramer and two H2A-H2B heterodimers. The octamer wraps approximately 147 bp of DNA. H2A or its variant H2A.Z forms a heterodimer with H2B. H2A.Z associates with the VPS72/SWC2 subunit of the SWR1 chromatin remodeling complex. Also interacts with RBP1/DNA-directed RNA polymerase II largest subunit. In terms of processing, acetylated once deposited into chromatin.

It localises to the nucleus. The protein resides in the chromosome. Variant histone H2A which can replace H2A in some nucleosomes. Nucleosomes wrap and compact DNA into chromatin, limiting DNA accessibility to the cellular machineries which require DNA as a template. Histones thereby play a central role in transcription regulation, DNA repair, DNA replication and chromosomal stability. DNA accessibility is regulated via a complex set of post-translational modifications of histones, also called histone code, and nucleosome remodeling. This variant is enriched at promoters, it may keep them in a repressed state until the appropriate activation signal is received. Near telomeres, it may counteract gene silencing caused by the spread of heterochromatin proteins. Required for the RNA polymerase II and SPT15/TBP recruitment to the target genes. Involved in chromosome stability. This chain is Histone H2A.Z (HTZ1), found in Cryptococcus neoformans var. neoformans serotype D (strain B-3501A) (Filobasidiella neoformans).